The primary structure comprises 607 residues: UvrABC system protein C (607 aa).

A GIY-YIG domain is found at 16–94 (GRPGVYRMFD…IKEWRPPYNI (79 aa)). In terms of domain architecture, UVR spans 203–238 (QQLGNELNAEMEKAAMALDFEKAAELRDQIALLRRV).

This sequence belongs to the UvrC family. As to quaternary structure, interacts with UvrB in an incision complex.

Its subcellular location is the cytoplasm. In terms of biological role, the UvrABC repair system catalyzes the recognition and processing of DNA lesions. UvrC both incises the 5' and 3' sides of the lesion. The N-terminal half is responsible for the 3' incision and the C-terminal half is responsible for the 5' incision. This chain is UvrABC system protein C, found in Pseudomonas putida (strain ATCC 700007 / DSM 6899 / JCM 31910 / BCRC 17059 / LMG 24140 / F1).